A 78-amino-acid polypeptide reads, in one-letter code: Beta-defensin 105A (78 aa).

A signal peptide spans 1–27 (MALIRKTFYFLFAVFFVLVQLPSECQA). Intrachain disulfides connect Cys-43-Cys-74, Cys-53-Cys-67, and Cys-57-Cys-73.

It belongs to the beta-defensin family.

The protein localises to the secreted. In terms of biological role, has antimicrobial activity. This is Beta-defensin 105A (DEFB105A) from Pongo pygmaeus (Bornean orangutan).